The sequence spans 186 residues: ATP synthase subunit b 3 (186 aa).

The chain crosses the membrane as a helical span at residues 5–25 (LLPALLTFSATPALAAKGPFF).

The protein belongs to the ATPase B chain family. As to quaternary structure, F-type ATPases have 2 components, F(1) - the catalytic core - and F(0) - the membrane proton channel. F(1) has five subunits: alpha(3), beta(3), gamma(1), delta(1), epsilon(1). F(0) has three main subunits: a(1), b(2) and c(10-14). The alpha and beta chains form an alternating ring which encloses part of the gamma chain. F(1) is attached to F(0) by a central stalk formed by the gamma and epsilon chains, while a peripheral stalk is formed by the delta and b chains.

It is found in the cell inner membrane. Its function is as follows. F(1)F(0) ATP synthase produces ATP from ADP in the presence of a proton or sodium gradient. F-type ATPases consist of two structural domains, F(1) containing the extramembraneous catalytic core and F(0) containing the membrane proton channel, linked together by a central stalk and a peripheral stalk. During catalysis, ATP synthesis in the catalytic domain of F(1) is coupled via a rotary mechanism of the central stalk subunits to proton translocation. Functionally, component of the F(0) channel, it forms part of the peripheral stalk, linking F(1) to F(0). The polypeptide is ATP synthase subunit b 3 (Dinoroseobacter shibae (strain DSM 16493 / NCIMB 14021 / DFL 12)).